Here is a 320-residue protein sequence, read N- to C-terminus: Cytochrome f (320 aa).

An N-terminal signal peptide occupies residues 1–35; that stretch reads MQTRNTFSSIKEEITRSISVSLMIYIITWAPVSNA. 4 residues coordinate heme: Tyr36, Cys56, Cys59, and His60. A helical transmembrane segment spans residues 286 to 306; the sequence is VQGLLFFFASVILAQIFLVLK.

It belongs to the cytochrome f family. The 4 large subunits of the cytochrome b6-f complex are cytochrome b6, subunit IV (17 kDa polypeptide, petD), cytochrome f and the Rieske protein, while the 4 small subunits are PetG, PetL, PetM and PetN. The complex functions as a dimer. It depends on heme as a cofactor.

The protein localises to the plastid. The protein resides in the chloroplast thylakoid membrane. Functionally, component of the cytochrome b6-f complex, which mediates electron transfer between photosystem II (PSII) and photosystem I (PSI), cyclic electron flow around PSI, and state transitions. The protein is Cytochrome f of Cucumis sativus (Cucumber).